The sequence spans 475 residues: MNTTIAQQIAKEGGVEAYLHAQQHKSLLRFLTCGSVDDGKSTLIGRLLHDTRQIYEDQLSSLHNDSKRHGTQGEKLDLALLVDGLQAEREQGITIDVAYRYFSTEKRKFIIADTPGHEQYTRNMATGASTCDLAILLMDARKGVLDQTRRHSFISTLLGIKHLVVAVNKMDLVDFSEETFERIRQDYLTFAGQLPGNLDIRFVPLSALEGDNVAVQSQNMPWYTGPTLLEVLENIEIQRVVDEQPLRFPVQYVNRPNLDFRGYAGTVAGGVVKVGQRVKALPSGVESSVARIVTFDGDLEEAGAGEAVTLVLKDEIDISRGDLLVDASQTLAAVQSAAVDVVWMAEQPLVPGQSYDIKIAGKKTRARVDNIHYQVDINNLTQRVVENLPLNGIGLVDLTFDEPLNLDKYQENPVTGGLIFIDRLSNVTVGAGMVREPQQNVYQEPSAFSAFELELNQLIRRHFPHWGARDLLGGK.

Positions 25-241 constitute a tr-type G domain; it reads KSLLRFLTCG…LENIEIQRVV (217 aa). The tract at residues 34–41 is G1; the sequence is GSVDDGKS. A GTP-binding site is contributed by 34-41; sequence GSVDDGKS. Residues 92–96 are G2; the sequence is GITID. Positions 113–116 are G3; sequence DTPG. Residues 113–117 and 168–171 each bind GTP; these read DTPGH and NKMD. The interval 168 to 171 is G4; that stretch reads NKMD. The interval 206 to 208 is G5; the sequence is SAL.

The protein belongs to the TRAFAC class translation factor GTPase superfamily. Classic translation factor GTPase family. CysN/NodQ subfamily. In terms of assembly, heterodimer composed of CysD, the smaller subunit, and CysN.

The catalysed reaction is sulfate + ATP + H(+) = adenosine 5'-phosphosulfate + diphosphate. The protein operates within sulfur metabolism; hydrogen sulfide biosynthesis; sulfite from sulfate: step 1/3. Functionally, with CysD forms the ATP sulfurylase (ATPS) that catalyzes the adenylation of sulfate producing adenosine 5'-phosphosulfate (APS) and diphosphate, the first enzymatic step in sulfur assimilation pathway. APS synthesis involves the formation of a high-energy phosphoric-sulfuric acid anhydride bond driven by GTP hydrolysis by CysN coupled to ATP hydrolysis by CysD. The chain is Sulfate adenylyltransferase subunit 1 from Cronobacter sakazakii (strain ATCC BAA-894) (Enterobacter sakazakii).